The following is a 585-amino-acid chain: Ankyrin repeat protein OPG003 (585 aa).

ANK repeat units follow at residues 66–98, 172–220, 224–256, 297–333, and 336–365; these read CGMS…NFDN, DGLT…NINA, IGNT…DTRI, EGHH…QKDE, and NTMT…DINL. Residues 554 to 571 form a PRANC/F-box-like region; it reads LPPEIIRNIITKLSDYHL.

The protein belongs to the orthopoxvirus OPG003 family.

May be involved in virus-host protein interaction through the ankyrin repeats and PRANC regions. This Homo sapiens (Human) protein is Ankyrin repeat protein OPG003 (OPG003).